The sequence spans 178 residues: Large ribosomal subunit protein uL5 (178 aa).

This sequence belongs to the universal ribosomal protein uL5 family. In terms of assembly, part of the 50S ribosomal subunit; part of the 5S rRNA/L5/L18/L25 subcomplex. Contacts the 5S rRNA and the P site tRNA. Forms a bridge to the 30S subunit in the 70S ribosome.

Functionally, this is one of the proteins that bind and probably mediate the attachment of the 5S RNA into the large ribosomal subunit, where it forms part of the central protuberance. In the 70S ribosome it contacts protein S13 of the 30S subunit (bridge B1b), connecting the 2 subunits; this bridge is implicated in subunit movement. Contacts the P site tRNA; the 5S rRNA and some of its associated proteins might help stabilize positioning of ribosome-bound tRNAs. This is Large ribosomal subunit protein uL5 from Wolbachia pipientis subsp. Culex pipiens (strain wPip).